A 403-amino-acid polypeptide reads, in one-letter code: Fasciclin-like arabinogalactan protein 2 (403 aa).

Positions 1-26 (MAYLRRAATALVLIFQLHLFLSLSNA) are cleaved as a signal peptide. FAS1 domains are found at residues 27 to 174 (HNIT…SQVL) and 187 to 326 (SDLI…DKVL). N-linked (GlcNAc...) asparagine glycans are attached at residues asparagine 28, asparagine 130, asparagine 164, and asparagine 248. Residues 338–371 (SAPAPKSSKKKPKNAEADADGPSADAPSDDDVEV) form a disordered region. The GPI-anchor amidated alanine moiety is linked to residue alanine 378. The propeptide at 379 to 403 (VSAMITRTSNVVTAIVGLCFGVWLM) is removed in mature form.

The protein belongs to the fasciclin-like AGP family. Expressed mainly in flowers and to a lesser extent in leaves and roots.

It is found in the cell membrane. Functionally, may be a cell surface adhesion protein. The chain is Fasciclin-like arabinogalactan protein 2 (FLA2) from Arabidopsis thaliana (Mouse-ear cress).